The sequence spans 261 residues: Undecaprenyl-diphosphatase (261 aa).

Helical transmembrane passes span 38–58 (RSDFFNIVIQAGAILAITFVF), 75–95 (RDYVMKLATAFLITAVVGLAV), 106–126 (IQPIAWALIIGGIWILIAESV), 136–156 (VTWSVAIAVGLAQVVAGVFPG), 181–201 (FSFLVGIPTMFSASSYACFEL), 217–237 (VAFVAAMLTGFAVVKWLLGYI), and 241–261 (SFAPFAYYRIALGLVLLTWLT).

This sequence belongs to the UppP family.

It is found in the cell inner membrane. It carries out the reaction di-trans,octa-cis-undecaprenyl diphosphate + H2O = di-trans,octa-cis-undecaprenyl phosphate + phosphate + H(+). Its function is as follows. Catalyzes the dephosphorylation of undecaprenyl diphosphate (UPP). Confers resistance to bacitracin. The chain is Undecaprenyl-diphosphatase from Xylella fastidiosa (strain 9a5c).